The sequence spans 7354 residues: Microtubule-actin cross-linking factor 1, isoforms 1/2/3/4 (7354 aa).

Residues 1–47 (MSSSDEETLSERSCRSERSCRSERSYRSERSGSLSPCPPGDTLPWNL) form a disordered region. Residues 1–295 (MSSSDEETLS…VITYVSSIYD (295 aa)) are actin-binding. Phosphoserine is present on serine 4. The segment covering 9–30 (LSERSCRSERSCRSERSYRSER) has biased composition (basic and acidic residues). A Phosphoserine modification is found at serine 35. Position 42 is a phosphothreonine (threonine 42). Serine 57 is subject to Phosphoserine. Calponin-homology (CH) domains are found at residues 78–181 (RVQK…LHFQ) and 194–298 (MSAK…DAFP). Residues 148–171 (QRQVKLVNIRNDDITDGNPKLTLG) form an LRR 1 repeat. Residue serine 280 is modified to Phosphoserine. LRR repeat units lie at residues 377–399 (LYKL…YHPN) and 441–464 (LNCE…LESG). Positions 868-925 (KSTLSVKAICDYRQIEITICKNDECVLEDNSQRTKWKVISPTGNEAMVPSVCFLIPPP) constitute an SH3 domain. The stretch at 1050–1073 (ISELKNIRLLLEECEQRLLKQIQS) is one LRR 5 repeat. Serine 1122 is modified (phosphoserine). LRR repeat units follow at residues 1128–1154 (ATTL…VYLN), 1187–1210 (PADL…VKDK), and 1257–1282 (HRVI…DYRA). Phosphoserine is present on residues serine 1367 and serine 1376. Plectin repeat units lie at residues 1577-1619 (LVLL…QLLG), 1654-1696 (LKVL…ELQS), 1769-1809 (RLLE…CAIL), 1811-1848 (RQLQ…VILE), and 1855-1885 (GLLL…HKIL). A phosphoserine mark is found at serine 2051, serine 2077, and serine 2081. 2 stretches are compositionally biased toward basic and acidic residues: residues 2120–2131 (KEEQAETLREEN) and 2145–2155 (SEGKDLSTEKS). Residues 2120-2155 (KEEQAETLREENISGDPLLVECPEESEGKDLSTEKS) are disordered. 5 Plectin repeats span residues 2276-2316 (STLS…VKLM), 2352-2393 (NVLM…RILE), 2394-2425 (GQVI…DTAD), 2487-2528 (LLTK…LRKV), and 2671-2715 (LKVL…ASHQ). Disordered regions lie at residues 2806 to 2841 (AGIR…DSKV), 2951 to 2978 (EMGG…EVTI), and 3058 to 3099 (SQET…HISK). A compositionally biased stretch (basic and acidic residues) spans 2812–2837 (NGEKAEKGRKISVEMEGQRQDEKASS). Over residues 2968-2978 (SEEESDQEVTI) the composition is skewed to acidic residues. Residues serine 3082 and serine 3085 each carry the phosphoserine modification. LRR repeat units lie at residues 3225 to 3244 (VGQR…LPTR), 3606 to 3630 (SGKS…IQSH), and 3657 to 3681 (LTAL…TRVA). Spectrin repeat units follow at residues 3845–3920 (ELQK…NFEE) and 3962–4070 (QYQQ…ALLQ). The residue at position 3889 (serine 3889) is a Phosphoserine. The LRR 12 repeat unit spans residues 3898–3920 (KGDLRFVTISGQKVLETENNFEE). LRR repeat units follow at residues 4087-4112 (LQSI…VIQE) and 4223-4249 (IQEL…TLGS). The stretch at 4428–4536 (RMEEVQKEAS…TVARQKQLEE (109 aa)) is one Spectrin 3 repeat. Residues serine 4458 and serine 4483 each carry the phosphoserine modification. LRR repeat units lie at residues 4473–4496 (KAFL…LAGL), 4563–4583 (GVLG…QFML), and 4728–4751 (KKRL…RMNR). One copy of the Spectrin 4 repeat lies at 4759–4863 (TQQFQQMFDE…KTANRQSRLK (105 aa)). Serine 4921 is modified (phosphoserine). LRR repeat units follow at residues 5010–5035 (NKNL…YLRN), 5131–5153 (NKIQ…MLEE), and 5240–5263 (KDQV…LIQS). Spectrin repeat units lie at residues 5195–5300 (EDFY…QLQE), 5307–5409 (KFQD…QLED), 5414–5506 (AKQF…ADIT), 5631–5735 (RSQQ…ARLE), 5742–5844 (NQFW…ALDE), 5961–6066 (LAEK…KLED), 6071–6175 (AVQY…HKLE), 6181–6284 (LGQF…QQLQ), 6289–6395 (QAQG…KLEE), 6400–6503 (ATEF…RSLD), 6508–6614 (RAKQ…KLEE), 6621–6722 (QFMD…RLEQ), and 6726–6830 (QAEE…QRLE). Threonine 5394 is modified (phosphothreonine). LRR repeat units lie at residues 5654 to 5678 (MALG…AFSI) and 5763 to 5787 (AQLP…QLRE). Residue serine 5988 is modified to Phosphoserine. Lysine 6166 bears the N6-acetyllysine mark. The stretch at 6452–6475 (RDQIIELDQTGNQLKFLSQKQDVV) is one LRR 23 repeat. Positions 6904–6937 (SVEPTHAPFMEKSRSGSRKSLNQPTPPPMPILSQ) are disordered. Serine 6923 carries the post-translational modification Phosphoserine. EF-hand domains lie at 7001-7036 (HKKS…SKFP) and 7037-7072 (TTKL…NKDA). Residues aspartate 7014, aspartate 7016, aspartate 7018, lysine 7020, glutamate 7025, aspartate 7050, aspartate 7052, aspartate 7054, tyrosine 7056, and glutamate 7061 each contribute to the Ca(2+) site. The 79-residue stretch at 7077–7155 (TDADKIEDEV…EFLVKNDPCR (79 aa)) folds into the GAR domain. Positions 7077–7354 (TDADKIEDEV…ASPRTPGPKR (278 aa)) are C-terminal tail. Residues 7171–7354 (PEGASQGMTP…ASPRTPGPKR (184 aa)) form a disordered region. The segment covering 7191 to 7225 (SSRAASPTRSSSSASQSNHSCTSMPSSPATPASGT) has biased composition (low complexity). Threonine 7220 carries the post-translational modification Phosphothreonine. Positions 7242 to 7261 (FHSSRTSLAGDTSNSSSPAS) are enriched in polar residues. Serine 7245 and serine 7258 each carry phosphoserine. Over residues 7276–7290 (SRPGSRAGSRAGSRA) the composition is skewed to low complexity. A 4 X 4 AA tandem repeats of [GS]-S-R-[AR] region spans residues 7279-7294 (GSRAGSRAGSRASSRR). Phosphoserine occurs at positions 7296 and 7299. Positions 7305–7315 (ETQSACSDTSE) are enriched in polar residues. Over residues 7316–7327 (SSAAGGQGSSRR) the composition is skewed to low complexity.

Belongs to the plakin or cytolinker family. Interacts with AXIN1, LRP6 and GOLGA4. Found in a complex composed of MACF1, APC, AXIN1, CTNNB1 and GSK3B. Interacts with MAPRE1, CLASP1 and CLASP2. Interacts with CAMSAP3. Phosphorylated on serine residues in the C-terminal tail by GSK3B. Phosphorylation inhibits microtubule-binding and this plays a critical role in bulge stem cell migration and skin wound repair. Wnt-signaling can repress phosphorylation. As to expression, enriched in the hair follicle stem cells (at protein level). Isoform 1 and isoform 2 are ubiquitous expressed, with higher levels seen in lung, heart, thymus, spleen and brain.

Its subcellular location is the cytoplasm. It is found in the cytoskeleton. The protein resides in the golgi apparatus. The protein localises to the cell membrane. It localises to the cell projection. Its subcellular location is the ruffle membrane. In terms of biological role, F-actin-binding protein which plays a role in cross-linking actin to other cytoskeletal proteins and also binds to microtubules. Plays an important role in ERBB2-dependent stabilization of microtubules at the cell cortex. Acts as a positive regulator of Wnt receptor signaling pathway and is involved in the translocation of AXIN1 and its associated complex (composed of APC, CTNNB1 and GSK3B) from the cytoplasm to the cell membrane. Has actin-regulated ATPase activity and is essential for controlling focal adhesions (FAs) assembly and dynamics. Interaction with CAMSAP3 at the minus ends of non-centrosomal microtubules tethers microtubules minus-ends to actin filaments, regulating focal adhesion size and cell migration. May play role in delivery of transport vesicles containing GPI-linked proteins from the trans-Golgi network through its interaction with GOLGA4. Plays a key role in wound healing and epidermal cell migration. Required for efficient upward migration of bulge cells in response to wounding and this function is primarily rooted in its ability to coordinate microtubule dynamics and polarize hair follicle stem cells. As a regulator of actin and microtubule arrangement and stabilization, it plays an essential role in neurite outgrowth, branching and spine formation during brain development. This is Microtubule-actin cross-linking factor 1, isoforms 1/2/3/4 from Mus musculus (Mouse).